A 227-amino-acid chain; its full sequence is Cytochrome c oxidase subunit 2 (227 aa).

Over 1 to 14 the chain is Mitochondrial intermembrane; it reads MAYPFQLGLQDATS. Residues 15–45 traverse the membrane as a helical segment; it reads PIMEELLHFHDHTLMIVFLISSLVLYIISLM. Residues 46–59 are Mitochondrial matrix-facing; sequence LTTKLTHTSTMDAQ. Residues 60–87 traverse the membrane as a helical segment; the sequence is EVETVWTILPAIILISIALPSLRILYMM. Topologically, residues 88–227 are mitochondrial intermembrane; it reads DEINNPSLTV…YFEAWSTLMM (140 aa). Cu cation is bound by residues histidine 161, cysteine 196, glutamate 198, cysteine 200, histidine 204, and methionine 207. Glutamate 198 is a binding site for Mg(2+). Tyrosine 218 carries the phosphotyrosine modification.

The protein belongs to the cytochrome c oxidase subunit 2 family. As to quaternary structure, component of the cytochrome c oxidase (complex IV, CIV), a multisubunit enzyme composed of 14 subunits. The complex is composed of a catalytic core of 3 subunits MT-CO1, MT-CO2 and MT-CO3, encoded in the mitochondrial DNA, and 11 supernumerary subunits COX4I, COX5A, COX5B, COX6A, COX6B, COX6C, COX7A, COX7B, COX7C, COX8 and NDUFA4, which are encoded in the nuclear genome. The complex exists as a monomer or a dimer and forms supercomplexes (SCs) in the inner mitochondrial membrane with NADH-ubiquinone oxidoreductase (complex I, CI) and ubiquinol-cytochrome c oxidoreductase (cytochrome b-c1 complex, complex III, CIII), resulting in different assemblies (supercomplex SCI(1)III(2)IV(1) and megacomplex MCI(2)III(2)IV(2)). Found in a complex with TMEM177, COA6, COX18, COX20, SCO1 and SCO2. Interacts with TMEM177 in a COX20-dependent manner. Interacts with COX20. Interacts with COX16. Cu cation serves as cofactor.

Its subcellular location is the mitochondrion inner membrane. The catalysed reaction is 4 Fe(II)-[cytochrome c] + O2 + 8 H(+)(in) = 4 Fe(III)-[cytochrome c] + 2 H2O + 4 H(+)(out). Functionally, component of the cytochrome c oxidase, the last enzyme in the mitochondrial electron transport chain which drives oxidative phosphorylation. The respiratory chain contains 3 multisubunit complexes succinate dehydrogenase (complex II, CII), ubiquinol-cytochrome c oxidoreductase (cytochrome b-c1 complex, complex III, CIII) and cytochrome c oxidase (complex IV, CIV), that cooperate to transfer electrons derived from NADH and succinate to molecular oxygen, creating an electrochemical gradient over the inner membrane that drives transmembrane transport and the ATP synthase. Cytochrome c oxidase is the component of the respiratory chain that catalyzes the reduction of oxygen to water. Electrons originating from reduced cytochrome c in the intermembrane space (IMS) are transferred via the dinuclear copper A center (CU(A)) of subunit 2 and heme A of subunit 1 to the active site in subunit 1, a binuclear center (BNC) formed by heme A3 and copper B (CU(B)). The BNC reduces molecular oxygen to 2 water molecules using 4 electrons from cytochrome c in the IMS and 4 protons from the mitochondrial matrix. The chain is Cytochrome c oxidase subunit 2 (MT-CO2) from Lycaon pictus (African wild dog).